Reading from the N-terminus, the 221-residue chain is Superoxide dismutase [Mn] 1, mitochondrial (221 aa).

Residues 1 to 24 (MLQNTVRCVSKLVQPITGVAAVRS) constitute a mitochondrion transit peptide. Residues His-50, His-98, Asp-182, and His-186 each contribute to the Mn(2+) site.

The protein belongs to the iron/manganese superoxide dismutase family. In terms of assembly, homotetramer. Mn(2+) is required as a cofactor.

It localises to the mitochondrion matrix. It catalyses the reaction 2 superoxide + 2 H(+) = H2O2 + O2. Destroys superoxide anion radicals which are normally produced within the cells and which are toxic to biological systems. This is Superoxide dismutase [Mn] 1, mitochondrial (sod-2) from Caenorhabditis elegans.